The primary structure comprises 187 residues: Elongation factor P (187 aa).

It belongs to the elongation factor P family.

The protein localises to the cytoplasm. It participates in protein biosynthesis; polypeptide chain elongation. In terms of biological role, involved in peptide bond synthesis. Stimulates efficient translation and peptide-bond synthesis on native or reconstituted 70S ribosomes in vitro. Probably functions indirectly by altering the affinity of the ribosome for aminoacyl-tRNA, thus increasing their reactivity as acceptors for peptidyl transferase. This is Elongation factor P from Treponema denticola (strain ATCC 35405 / DSM 14222 / CIP 103919 / JCM 8153 / KCTC 15104).